The following is a 519-amino-acid chain: Protein BANP (519 aa).

Phosphoserine is present on residues Ser-19, Ser-90, and Ser-100. A coiled-coil region spans residues 53–90 (IKTICLRLDSIEAKLQALEATCKSLEEKLDLVTNKQHS). Lys-133 is covalently cross-linked (Glycyl lysine isopeptide (Lys-Gly) (interchain with G-Cter in SUMO2)). Residues 152–342 (NAVPGRRQNT…FSRRTPNSSS (191 aa)) form an interaction with CUX1 and HDAC1 region. Basic and acidic residues predominate over residues 168 to 177 (GQEDSHHEDG). The interval 168–196 (GQEDSHHEDGESGSEASDSVSSCGQAGSQ) is disordered. Low complexity predominate over residues 180 to 189 (GSEASDSVSS). One can recognise a BEN domain in the interval 226–322 (EMRVRCAIIP…SKCRTAWRRK (97 aa)). The residue at position 275 (Lys-275) is an N6-acetyllysine. Residues 327-364 (SLAVKSFSRRTPNSSSYCPSEPMMSTPPPASELPQPQP) form a disordered region. A compositionally biased stretch (polar residues) spans 335–344 (RRTPNSSSYC). Phosphothreonine occurs at positions 337 and 352. The DNA-binding stretch occupies residues 342-393 (SYCPSEPMMSTPPPASELPQPQPQPQALHYALANAQQVQIHQIGEDGQVQVG). Pro residues predominate over residues 351–364 (STPPPASELPQPQP).

The protein belongs to the BANP/SMAR1 family. As to quaternary structure, part of a corepressor complex containing BANP, HDAC1, SIN3A, SIN3B, RBL1 and RBL2. Forms a trimeric complex in the nucleus consisting of BANP, HDAC6 and KHDRBS1/SAM68; HDAC6 keeps KHDRBS1 in a deacetylated state which inhibits the inclusion of CD44 alternate exons. The complex is disrupted by MAPK1/MAPK3-mediated phosphorylation of BANP which results in BANP export to the cytoplasm. This facilitates acetylation of KHDRBS1 and CD44 variant exon inclusion. Interacts with TP53. Interacts with CUX1/CDP. Interacts with HDAC1. MAPK1/MAPK3-mediated phosphorylation at Thr-337 and Thr-352 results in export to the cytoplasm. In terms of tissue distribution, down-regulated in breast cancer cell lines.

The protein resides in the nucleus. The protein localises to the nucleus speckle. Its subcellular location is the cytoplasm. Its function is as follows. Controls V(D)J recombination during T-cell development by repressing T-cell receptor (TCR) beta enhancer function. Binds to scaffold/matrix attachment region beta (S/MARbeta), an ATC-rich DNA sequence located upstream of the TCR beta enhancer. Represses cyclin D1 transcription by recruiting HDAC1 to its promoter, thereby diminishing H3K9ac, H3S10ph and H4K8ac levels. Promotes TP53 activation, which causes cell cycle arrest. Plays a role in the regulation of alternative splicing. Binds to CD44 pre-mRNA and negatively regulates the inclusion of CD44 proximal variable exons v2-v6 but has no effect on distal variable exons v7-v10. The sequence is that of Protein BANP (BANP) from Homo sapiens (Human).